Consider the following 318-residue polypeptide: ATP-dependent (S)-NAD(P)H-hydrate dehydratase (318 aa).

The 311-residue stretch at 3 to 313 folds into the YjeF C-terminal domain; it reads AREVFKRVIP…KEIGPAFDSL (311 aa). (6S)-NADPHX is bound by residues Gly-119 and 172 to 178; that span reads NTNEFKR. ATP-binding positions include 210–214 and 229–238; these read KGSKD and TSLRRCGGQG. Asp-239 is a (6S)-NADPHX binding site.

It belongs to the NnrD/CARKD family. The cofactor is Mg(2+).

The protein localises to the cytoplasm. The catalysed reaction is (6S)-NADHX + ATP = ADP + phosphate + NADH + H(+). It carries out the reaction (6S)-NADPHX + ATP = ADP + phosphate + NADPH + H(+). In terms of biological role, catalyzes the dehydration of the S-form of NAD(P)HX at the expense of ATP, which is converted to ADP. Together with NAD(P)HX epimerase, which catalyzes the epimerization of the S- and R-forms, the enzyme allows the repair of both epimers of NAD(P)HX, a damaged form of NAD(P)H that is a result of enzymatic or heat-dependent hydration. The polypeptide is ATP-dependent (S)-NAD(P)H-hydrate dehydratase (Batrachochytrium dendrobatidis (strain JAM81 / FGSC 10211) (Frog chytrid fungus)).